The sequence spans 388 residues: Homeobox protein XHOX-3 (388 aa).

Disordered regions lie at residues 30–109 (AVGS…SDFY) and 131–163 (SAGQCSEPMGGSPVNGSDSSKGGGGSHGSFSAC). Composition is skewed to polar residues over residues 68–81 (ATGQQRSRSPQLRI) and 91–103 (DSLSTKGQHSSSD). A DNA-binding region (homeobox) is located at residues 168–227 (MRRYRTAFTREQIARLEKEFYRENYVSRPRRCELAAALNLPETTIKVWFQNRRMKDKRQR).

It belongs to the even-skipped homeobox family.

The protein localises to the nucleus. Its function is as follows. May be required for posterior development and development of normal embryonic axial pattern. The polypeptide is Homeobox protein XHOX-3 (xhox3) (Xenopus laevis (African clawed frog)).